Reading from the N-terminus, the 192-residue chain is Probable GTP-binding protein EngB (192 aa).

One can recognise an EngB-type G domain in the interval 22-192; sequence QIPEIVFAGR…LLAHLAQYIR (171 aa). GTP-binding positions include 30–37, 57–61, 75–78, 142–145, and 172–174; these read GRSNVGKS, GKTRL, DLPG, TKDD, and YSS. Mg(2+)-binding residues include S37 and T59.

The protein belongs to the TRAFAC class TrmE-Era-EngA-EngB-Septin-like GTPase superfamily. EngB GTPase family. The cofactor is Mg(2+).

Its function is as follows. Necessary for normal cell division and for the maintenance of normal septation. The chain is Probable GTP-binding protein EngB from Chlorobium phaeobacteroides (strain DSM 266 / SMG 266 / 2430).